The chain runs to 155 residues: Endoribonuclease YbeY (155 aa).

Positions 114, 118, and 124 each coordinate Zn(2+).

It belongs to the endoribonuclease YbeY family. The cofactor is Zn(2+).

It localises to the cytoplasm. Single strand-specific metallo-endoribonuclease involved in late-stage 70S ribosome quality control and in maturation of the 3' terminus of the 16S rRNA. This Erwinia tasmaniensis (strain DSM 17950 / CFBP 7177 / CIP 109463 / NCPPB 4357 / Et1/99) protein is Endoribonuclease YbeY.